A 339-amino-acid polypeptide reads, in one-letter code: Cobalt-precorrin-5B C(1)-methyltransferase (339 aa).

This sequence belongs to the CbiD family.

It catalyses the reaction Co-precorrin-5B + S-adenosyl-L-methionine = Co-precorrin-6A + S-adenosyl-L-homocysteine. Its pathway is cofactor biosynthesis; adenosylcobalamin biosynthesis; cob(II)yrinate a,c-diamide from sirohydrochlorin (anaerobic route): step 6/10. Its function is as follows. Catalyzes the methylation of C-1 in cobalt-precorrin-5B to form cobalt-precorrin-6A. The polypeptide is Cobalt-precorrin-5B C(1)-methyltransferase (Methanosarcina acetivorans (strain ATCC 35395 / DSM 2834 / JCM 12185 / C2A)).